A 241-amino-acid chain; its full sequence is Peroxisomal membrane protein 11C (241 aa).

Residues 1–124 lie on the Cytoplasmic side of the membrane; sequence MASLSGLASA…ARVLHVDSSR (124 aa). The chain crosses the membrane as a helical span at residues 125–149; that stretch reads WWTLSTTLWALSLLLGVARSLWMLL. Residues 150 to 211 are Lumenal-facing; sequence KLRQRLRSPT…GVLWAGRFPP (62 aa). The helical transmembrane segment at 212–227 threads the bilayer; the sequence is WLVGLMGTISSILSMY. Over 228-241 the chain is Cytoplasmic; that stretch reads QAARAGGQAEATTP.

It belongs to the peroxin-11 family. Homodimer. Heterodimer with either PEX11A or PEX11B. Interacts with FIS1.

The protein localises to the peroxisome membrane. In terms of biological role, promotes membrane protrusion and elongation on the peroxisomal surface. This is Peroxisomal membrane protein 11C (PEX11G) from Homo sapiens (Human).